Here is a 498-residue protein sequence, read N- to C-terminus: Glycerol kinase (498 aa).

Thr11 contributes to the ADP binding site. The ATP site is built by Thr11, Ser12, and Ser13. Residue Thr11 participates in sn-glycerol 3-phosphate binding. Arg15 contacts ADP. Residues Arg81, Glu82, Tyr133, and Asp242 each coordinate sn-glycerol 3-phosphate. 5 residues coordinate glycerol: Arg81, Glu82, Tyr133, Asp242, and Gln243. 2 residues coordinate ADP: Thr264 and Gly307. ATP contacts are provided by Thr264, Gly307, Gln311, and Gly408. ADP contacts are provided by Gly408 and Asn412.

Belongs to the FGGY kinase family.

The enzyme catalyses glycerol + ATP = sn-glycerol 3-phosphate + ADP + H(+). The protein operates within polyol metabolism; glycerol degradation via glycerol kinase pathway; sn-glycerol 3-phosphate from glycerol: step 1/1. With respect to regulation, inhibited by fructose 1,6-bisphosphate (FBP). Its function is as follows. Key enzyme in the regulation of glycerol uptake and metabolism. Catalyzes the phosphorylation of glycerol to yield sn-glycerol 3-phosphate. The chain is Glycerol kinase from Ralstonia nicotianae (strain ATCC BAA-1114 / GMI1000) (Ralstonia solanacearum).